The following is a 195-amino-acid chain: Ureidoglycolate lyase (195 aa).

This sequence belongs to the ureidoglycolate lyase family. Homodimer.

It carries out the reaction (S)-ureidoglycolate = urea + glyoxylate. It functions in the pathway nitrogen metabolism; (S)-allantoin degradation. Its function is as follows. Catalyzes the catabolism of the allantoin degradation intermediate (S)-ureidoglycolate, generating urea and glyoxylate. Involved in the utilization of allantoin as secondary nitrogen source when primary sources are limiting. The chain is Ureidoglycolate lyase (DAL3) from Saccharomyces cerevisiae (strain ATCC 204508 / S288c) (Baker's yeast).